Consider the following 251-residue polypeptide: Ubiquinone/menaquinone biosynthesis C-methyltransferase UbiE (251 aa).

Residues Thr74, Asp95, 123 to 124, and Ser140 each bind S-adenosyl-L-methionine; that span reads NA.

This sequence belongs to the class I-like SAM-binding methyltransferase superfamily. MenG/UbiE family.

It carries out the reaction a 2-demethylmenaquinol + S-adenosyl-L-methionine = a menaquinol + S-adenosyl-L-homocysteine + H(+). The catalysed reaction is a 2-methoxy-6-(all-trans-polyprenyl)benzene-1,4-diol + S-adenosyl-L-methionine = a 5-methoxy-2-methyl-3-(all-trans-polyprenyl)benzene-1,4-diol + S-adenosyl-L-homocysteine + H(+). The protein operates within quinol/quinone metabolism; menaquinone biosynthesis; menaquinol from 1,4-dihydroxy-2-naphthoate: step 2/2. It functions in the pathway cofactor biosynthesis; ubiquinone biosynthesis. Its function is as follows. Methyltransferase required for the conversion of demethylmenaquinol (DMKH2) to menaquinol (MKH2) and the conversion of 2-polyprenyl-6-methoxy-1,4-benzoquinol (DDMQH2) to 2-polyprenyl-3-methyl-6-methoxy-1,4-benzoquinol (DMQH2). The polypeptide is Ubiquinone/menaquinone biosynthesis C-methyltransferase UbiE (Klebsiella pneumoniae subsp. pneumoniae (strain ATCC 700721 / MGH 78578)).